The sequence spans 348 residues: Serine/threonine-protein kinase SBK2 (348 aa).

The segment at 1-25 (MPGKQSEEGPAEAGASEDSEEEGLG) is disordered. Residues 62-330 (YEEVRPLGQG…IREHLGRPWR (269 aa)) enclose the Protein kinase domain. Residues 68-76 (LGQGCYGRV) and K91 contribute to the ATP site. Catalysis depends on D183, which acts as the Proton acceptor.

The protein belongs to the protein kinase superfamily. Ser/Thr protein kinase family. STKL subfamily.

The enzyme catalyses L-seryl-[protein] + ATP = O-phospho-L-seryl-[protein] + ADP + H(+). It catalyses the reaction L-threonyl-[protein] + ATP = O-phospho-L-threonyl-[protein] + ADP + H(+). This Homo sapiens (Human) protein is Serine/threonine-protein kinase SBK2 (SBK2).